The chain runs to 407 residues: Putative F-box protein At5g60560 (407 aa).

An F-box domain is found at 2–49 (TMMSDLSEDLVEEILCRVSITSLGAVRSTCKGWYVLSKTRVLCKAETK).

In Arabidopsis thaliana (Mouse-ear cress), this protein is Putative F-box protein At5g60560.